A 469-amino-acid polypeptide reads, in one-letter code: Putative dipeptidase SSP1012 (469 aa).

Histidine 84 is a binding site for Zn(2+). Residue aspartate 86 is part of the active site. Aspartate 115 contributes to the Zn(2+) binding site. Catalysis depends on glutamate 149, which acts as the Proton acceptor. Zn(2+)-binding residues include glutamate 150, aspartate 173, and histidine 440.

Belongs to the peptidase M20A family. Zn(2+) serves as cofactor.

The sequence is that of Putative dipeptidase SSP1012 from Staphylococcus saprophyticus subsp. saprophyticus (strain ATCC 15305 / DSM 20229 / NCIMB 8711 / NCTC 7292 / S-41).